The primary structure comprises 51 residues: Large ribosomal subunit protein eL39 (51 aa).

This sequence belongs to the eukaryotic ribosomal protein eL39 family.

The chain is Large ribosomal subunit protein eL39 from Methanobrevibacter smithii (strain ATCC 35061 / DSM 861 / OCM 144 / PS).